Here is a 484-residue protein sequence, read N- to C-terminus: Probable cytochrome P450 555A1 (484 aa).

Residues 1 to 21 (MIIIVIVVFLFYFSFLNLNLN) traverse the membrane as a helical segment. Cysteine 432 provides a ligand contact to heme.

Belongs to the cytochrome P450 family. It depends on heme as a cofactor.

The protein localises to the membrane. This Dictyostelium discoideum (Social amoeba) protein is Probable cytochrome P450 555A1 (cyp555A1).